Reading from the N-terminus, the 332-residue chain is DNA-directed RNA polymerase subunit alpha (332 aa).

Residues 1 to 226 (MLIAQRPTLT…ELFGLCRELN (226 aa)) form an alpha N-terminal domain (alpha-NTD) region. Residues 245 to 332 (PEMNIPIEDL…GGTFFSPEDE (88 aa)) form an alpha C-terminal domain (alpha-CTD) region.

Belongs to the RNA polymerase alpha chain family. As to quaternary structure, homodimer. The RNAP catalytic core consists of 2 alpha, 1 beta, 1 beta' and 1 omega subunit. When a sigma factor is associated with the core the holoenzyme is formed, which can initiate transcription.

The enzyme catalyses RNA(n) + a ribonucleoside 5'-triphosphate = RNA(n+1) + diphosphate. In terms of biological role, DNA-dependent RNA polymerase catalyzes the transcription of DNA into RNA using the four ribonucleoside triphosphates as substrates. The sequence is that of DNA-directed RNA polymerase subunit alpha from Bifidobacterium adolescentis (strain ATCC 15703 / DSM 20083 / NCTC 11814 / E194a).